The following is a 142-amino-acid chain: 3-hydroxyacyl-[acyl-carrier-protein] dehydratase FabZ (142 aa).

Residue H48 is part of the active site.

The protein belongs to the thioester dehydratase family. FabZ subfamily.

It localises to the cytoplasm. It catalyses the reaction a (3R)-hydroxyacyl-[ACP] = a (2E)-enoyl-[ACP] + H2O. Involved in unsaturated fatty acids biosynthesis. Catalyzes the dehydration of short chain beta-hydroxyacyl-ACPs and long chain saturated and unsaturated beta-hydroxyacyl-ACPs. The chain is 3-hydroxyacyl-[acyl-carrier-protein] dehydratase FabZ from Ruminiclostridium cellulolyticum (strain ATCC 35319 / DSM 5812 / JCM 6584 / H10) (Clostridium cellulolyticum).